We begin with the raw amino-acid sequence, 258 residues long: UPF0246 protein ETA_07010 (258 aa).

The protein belongs to the UPF0246 family.

This chain is UPF0246 protein ETA_07010, found in Erwinia tasmaniensis (strain DSM 17950 / CFBP 7177 / CIP 109463 / NCPPB 4357 / Et1/99).